A 115-amino-acid polypeptide reads, in one-letter code: Holo-[acyl-carrier-protein] synthase (115 aa).

Mg(2+)-binding residues include aspartate 6 and glutamate 51.

The protein belongs to the P-Pant transferase superfamily. AcpS family. The cofactor is Mg(2+).

The protein resides in the cytoplasm. It carries out the reaction apo-[ACP] + CoA = holo-[ACP] + adenosine 3',5'-bisphosphate + H(+). Its function is as follows. Transfers the 4'-phosphopantetheine moiety from coenzyme A to a Ser of acyl-carrier-protein. The sequence is that of Holo-[acyl-carrier-protein] synthase from Campylobacter jejuni subsp. doylei (strain ATCC BAA-1458 / RM4099 / 269.97).